The sequence spans 357 residues: Glutamine synthetase root isozyme 5 (357 aa).

The GS beta-grasp domain occupies 19–99; sequence IIAEYIWVGG…VMCDCYTPQG (81 aa). Positions 106–357 constitute a GS catalytic domain; it reads KRYKAATVFS…ADTTILWKGN (252 aa).

The protein belongs to the glutamine synthetase family. In terms of assembly, homooctamer. In terms of tissue distribution, found mainly in the cortical tissues of seedling roots, stem and seedling shoot.

The protein resides in the cytoplasm. It carries out the reaction L-glutamate + NH4(+) + ATP = L-glutamine + ADP + phosphate + H(+). In terms of biological role, plays a role in the flow of nitrogen into nitrogenous organic compounds. The protein is Glutamine synthetase root isozyme 5 (GS1-5) of Zea mays (Maize).